Consider the following 862-residue polypeptide: ATP-dependent helicase Lhr-Core (862 aa).

ATP-binding residues include Gln-37, Lys-60, Thr-61, Asp-178, Glu-179, Val-360, Arg-377, and His-380. The 193-residue stretch at 41-233 (IMDIHRGRNV…FLVGYSYGSE (193 aa)) folds into the Helicase ATP-binding domain. Residues 178-181 (DEIH) carry the DEAH box motif. Residues 269-424 (ALYDILHDLI…SIKVPENCLD (156 aa)) enclose the Helicase C-terminal domain. The tract at residues 425–513 (VLAQHIYGMA…LYSTNIGTIP (89 aa)) is WH domain. The interval 514–862 (DRSAAVVKCG…HQAIIDEIKR (349 aa)) is domain 4.

The protein belongs to the Lhr helicase family. Lhr-Core subfamily. Monomer.

It catalyses the reaction Couples ATP hydrolysis with the unwinding of duplex DNA by translocating in the 3'-5' direction.. It carries out the reaction ATP + H2O = ADP + phosphate + H(+). Its function is as follows. DNA helicase that translocates in a 3'-5' direction on single-stranded (ss)DNA, probably involved in DNA repair. Most active on three- or four-stranded forked DNA; flayed structures and Holliday junction (HJ) substrates are unwound slightly less well. Also unwinds 3'-tailed duplexes; both RNA:DNA hybrids and double-stranded (ds)DNA with a 3'-single strand (ss)DNA loading strand are unwound. Substrates where the helicase loads on a 3'-ssRNA tail (DNA:RNA and RNA:RNA) were not tested. Blunt-ended dsDNA is not a substrate. Probably involved in replication-coupled DNA repair; remodeling of fork DNA after binding by Lhr generates ssDNA for ATP-dependent DNA translocation. This Methanothermobacter thermautotrophicus (strain ATCC 29096 / DSM 1053 / JCM 10044 / NBRC 100330 / Delta H) (Methanobacterium thermoautotrophicum) protein is ATP-dependent helicase Lhr-Core.